Reading from the N-terminus, the 879-residue chain is Alanine--tRNA ligase (879 aa).

The Zn(2+) site is built by His566, His570, Cys668, and His672.

This sequence belongs to the class-II aminoacyl-tRNA synthetase family. Requires Zn(2+) as cofactor.

Its subcellular location is the cytoplasm. It catalyses the reaction tRNA(Ala) + L-alanine + ATP = L-alanyl-tRNA(Ala) + AMP + diphosphate. Its function is as follows. Catalyzes the attachment of alanine to tRNA(Ala) in a two-step reaction: alanine is first activated by ATP to form Ala-AMP and then transferred to the acceptor end of tRNA(Ala). Also edits incorrectly charged Ser-tRNA(Ala) and Gly-tRNA(Ala) via its editing domain. This chain is Alanine--tRNA ligase, found in Clostridium tetani (strain Massachusetts / E88).